We begin with the raw amino-acid sequence, 124 residues long: Multifunctional methyltransferase subunit TRM112 homolog B (124 aa).

Residues Arg-2 to His-120 enclose the TRM112 domain.

Belongs to the TRM112 family. As to quaternary structure, interacts with TRM9. Expressed in anthers.

Functionally, acts as an activator of both rRNA/tRNA and protein methyltransferases. Required for TRM9 tRNA methyltransferase activity. This Arabidopsis thaliana (Mouse-ear cress) protein is Multifunctional methyltransferase subunit TRM112 homolog B.